The sequence spans 294 residues: Shikimate dehydrogenase (NADP(+)) (294 aa).

Shikimate-binding positions include 22 to 24 (SLS) and S69. The active-site Proton acceptor is K73. 2 residues coordinate shikimate: N94 and D111. Residues 135 to 139 (GAGGA) and L236 contribute to the NADP(+) site. Y238 contacts shikimate. G260 provides a ligand contact to NADP(+).

It belongs to the shikimate dehydrogenase family. Homodimer.

It catalyses the reaction shikimate + NADP(+) = 3-dehydroshikimate + NADPH + H(+). It functions in the pathway metabolic intermediate biosynthesis; chorismate biosynthesis; chorismate from D-erythrose 4-phosphate and phosphoenolpyruvate: step 4/7. Involved in the biosynthesis of the chorismate, which leads to the biosynthesis of aromatic amino acids. Catalyzes the reversible NADPH linked reduction of 3-dehydroshikimate (DHSA) to yield shikimate (SA). This Streptococcus equi subsp. zooepidemicus (strain H70) protein is Shikimate dehydrogenase (NADP(+)).